The sequence spans 106 residues: Pyrimidine/purine nucleoside phosphorylase (106 aa).

Belongs to the nucleoside phosphorylase PpnP family.

It carries out the reaction a purine D-ribonucleoside + phosphate = a purine nucleobase + alpha-D-ribose 1-phosphate. The catalysed reaction is adenosine + phosphate = alpha-D-ribose 1-phosphate + adenine. It catalyses the reaction cytidine + phosphate = cytosine + alpha-D-ribose 1-phosphate. The enzyme catalyses guanosine + phosphate = alpha-D-ribose 1-phosphate + guanine. It carries out the reaction inosine + phosphate = alpha-D-ribose 1-phosphate + hypoxanthine. The catalysed reaction is thymidine + phosphate = 2-deoxy-alpha-D-ribose 1-phosphate + thymine. It catalyses the reaction uridine + phosphate = alpha-D-ribose 1-phosphate + uracil. The enzyme catalyses xanthosine + phosphate = alpha-D-ribose 1-phosphate + xanthine. In terms of biological role, catalyzes the phosphorolysis of diverse nucleosides, yielding D-ribose 1-phosphate and the respective free bases. Can use uridine, adenosine, guanosine, cytidine, thymidine, inosine and xanthosine as substrates. Also catalyzes the reverse reactions. The polypeptide is Pyrimidine/purine nucleoside phosphorylase (Burkholderia ambifaria (strain MC40-6)).